The primary structure comprises 190 residues: MKCIVGLGNIGKRFELTRHNIGFEVVDDILERHQFTLDKQKFKGAYTIERLNGEKVLFIEPMTMMNLSGQAVAPLMDYYNVDVEDLIVLYDDLDLEQGQVRLRQKGSAGGHNGMKSIIKMLGTDQFKRIRIGVGRPTNGMSVPDYVLQKFSKEEMIIMEKVIEHSARAVESFIESSRFDHVMNEFNGEVK.

Phenylalanine 14 contacts tRNA. Catalysis depends on histidine 19, which acts as the Proton acceptor. The tRNA site is built by methionine 64, asparagine 66, and asparagine 112.

It belongs to the PTH family. In terms of assembly, monomer.

The protein localises to the cytoplasm. It catalyses the reaction an N-acyl-L-alpha-aminoacyl-tRNA + H2O = an N-acyl-L-amino acid + a tRNA + H(+). Hydrolyzes ribosome-free peptidyl-tRNAs (with 1 or more amino acids incorporated), which drop off the ribosome during protein synthesis, or as a result of ribosome stalling. In terms of biological role, catalyzes the release of premature peptidyl moieties from peptidyl-tRNA molecules trapped in stalled 50S ribosomal subunits, and thus maintains levels of free tRNAs and 50S ribosomes. The chain is Peptidyl-tRNA hydrolase from Staphylococcus epidermidis (strain ATCC 35984 / DSM 28319 / BCRC 17069 / CCUG 31568 / BM 3577 / RP62A).